A 326-amino-acid chain; its full sequence is Glutaminase 2 (326 aa).

Residues serine 73, asparagine 125, glutamate 169, asparagine 176, tyrosine 200, tyrosine 252, and valine 270 each contribute to the substrate site.

The protein belongs to the glutaminase family. In terms of assembly, homotetramer.

It catalyses the reaction L-glutamine + H2O = L-glutamate + NH4(+). In Bacillus cereus (strain ATCC 14579 / DSM 31 / CCUG 7414 / JCM 2152 / NBRC 15305 / NCIMB 9373 / NCTC 2599 / NRRL B-3711), this protein is Glutaminase 2.